Here is an 828-residue protein sequence, read N- to C-terminus: Toll-like receptor 4 (828 aa).

The N-terminal stretch at 1–23 (MMSASRLAGTLIPAMAFLSCVRP) is a signal peptide. The Extracellular segment spans residues 24–629 (ESWEPCVVPN…SLNITCQMNK (606 aa)). Cysteines 29 and 38 form a disulfide. A glycan (N-linked (GlcNAc...) asparagine) is linked at asparagine 33. LRR repeat units lie at residues 53-74 (STKNLDLSFNPLRHLGSYSFFS), 77-98 (ELQVLDLSRCEIQTIEDGAYQS), 101-122 (HLSTLILTGNPIQNLALGAFSG), 125-146 (SLQKLVAVETNLASLENFPIGH), and 149-170 (TLKELNVAHNLIQSFKLPEYFS). A glycan (N-linked (GlcNAc...) asparagine) is linked at asparagine 171. 3 LRR repeats span residues 174–195 (NLEHLDLSSNKIQSIYCKDLQV), 203–223 (NLSLDLSLNAMNFIQPGAFKE), and 225–245 (RLHKLTLRNSFDSLNVMKTCI). A glycan (N-linked (GlcNAc...) asparagine) is linked at asparagine 203. An intrachain disulfide couples cysteine 279 to cysteine 304. Residues asparagine 280 and asparagine 307 are each glycosylated (N-linked (GlcNAc...) asparagine). LRR repeat units follow at residues 372 to 392 (SLEFLDLSRNGLSFKGCCSQS), 398 to 420 (SLKYLDLSFNDVITMGSNFLGLE), 421 to 442 (QLEHLDFQHSNLKQMSEFSVFL), 446 to 454 (NLIYLDISH), 470 to 493 (SLKVLKMAGNSFQENFLPDIFTEL), 495 to 516 (NLTFLDLSQCQLEQLSPTAFNS), 519 to 540 (SLQVLNMSHNNFFSLDTFPYKC), and 543 to 563 (SLQVLDYSLNHIMTSKKQELQ). Cysteine 388 and cysteine 389 are oxidised to a cystine. N-linked (GlcNAc...) asparagine glycans are attached at residues asparagine 495 and asparagine 524. An N-linked (GlcNAc...) asparagine glycan is attached at asparagine 573. The region spanning 577–627 (NDFACTCEHQSFLQWIKDQRQLLVEVERMECATPSDKQGMPVLSLNITCQM) is the LRRCT domain. Disulfide bonds link cysteine 581/cysteine 607 and cysteine 583/cysteine 625. Residues asparagine 622 and asparagine 628 are each glycosylated (N-linked (GlcNAc...) asparagine). The helical transmembrane segment at 630-650 (TVIGVSVFSVLVVSVVAVLVY) threads the bilayer. The Cytoplasmic portion of the chain corresponds to 651–828 (KFYFHLMLLA…WNPEGTVGTG (178 aa)). In terms of domain architecture, TIR spans 670–813 (NTYDAFVIYS…IFWRRLRKAL (144 aa)).

Belongs to the Toll-like receptor family. Belongs to the lipopolysaccharide (LPS) receptor, a multi-protein complex containing at least CD14, LY96 and TLR4. Binding to bacterial LPS leads to homodimerization. Interacts with LY96 via the extracellular domain. Interacts with MYD88 and TIRAP via their respective TIR domains. Interacts with TICAM2. Interacts with NOX4. Interacts with CNPY3 and HSP90B1; this interaction is required for proper folding in the endoplasmic reticulum. Interacts with MAP3K21; this interaction leads to negative regulation of TLR4 signaling. Interacts with CD36, following CD36 stimulation by oxLDL or amyloid-beta 42, and forms a heterodimer with TLR6. The trimeric complex is internalized and triggers inflammatory response. LYN kinase activity facilitates TLR4-TLR6 heterodimerization and signal initiation. Interacts with TICAM1 in response to LPS in a WDFY1-dependent manner. Interacts with WDFY1 in response to LPS. Interacts with SMPDL3B. Interacts with CEACAM1; upon lipopolysaccharide stimulation, forms a complex including TLR4 and the phosphorylated form of SYK and CEACAM1, which in turn, recruits PTPN6 that dephosphorylates SYK, reducing the production of reactive oxygen species (ROS) and lysosome disruption, which in turn, reduces the activity of the inflammasome. Interacts with RFTN1; the interaction occurs in response to lipopolysaccharide stimulation. Interacts with SCIMP; the interaction occurs in response to lipopolysaccharide stimulation and is enhanced by phosphorylation of SCIMP by LYN. This interaction facilitates the phosphorylation of TLR4 by LYN which elicits a selective cytokine response in macrophages. Interacts with TRAF3IP3. Interacts with TREM1; this interaction enhances TLR4-mediated inflammatory response. Interacts with ZG16B/PAUF. Interacts with CD82; this interaction inhibits TLR4-mediated signaling pathway. Phosphorylated on tyrosine residues by LYN after binding lipopolysaccharide. Post-translationally, ubiquitinated by RNF128 via 'Lys-28'-linked polyubiquitin chains, leading to proteasomal degradation.

The protein localises to the cell membrane. It is found in the early endosome. It localises to the cell projection. The protein resides in the ruffle. Functionally, transmembrane receptor that functions as a pattern recognition receptor recognizing pathogen- and damage-associated molecular patterns (PAMPs and DAMPs) to induce innate immune responses via downstream signaling pathways. At the plasma membrane, cooperates with LY96 to mediate the innate immune response to bacterial lipopolysaccharide (LPS). Also involved in LPS-independent inflammatory responses triggered by free fatty acids, such as palmitate, and Ni(2+). Mechanistically, acts via MYD88, TIRAP and TRAF6, leading to NF-kappa-B activation, cytokine secretion and the inflammatory response. Alternatively, CD14-mediated TLR4 internalization via endocytosis is associated with the initiation of a MYD88-independent signaling via the TICAM1-TBK1-IRF3 axis leading to type I interferon production. In addition to the secretion of proinflammatory cytokines, initiates the activation of NLRP3 inflammasome and formation of a positive feedback loop between autophagy and NF-kappa-B signaling cascade. In complex with TLR6, promotes inflammation in monocytes/macrophages by associating with TLR6 and the receptor CD86. Upon ligand binding, such as oxLDL or amyloid-beta 42, the TLR4:TLR6 complex is internalized and triggers inflammatory response, leading to NF-kappa-B-dependent production of CXCL1, CXCL2 and CCL9 cytokines, via MYD88 signaling pathway, and CCL5 cytokine, via TICAM1 signaling pathway. In myeloid dendritic cells, vesicular stomatitis virus glycoprotein G but not LPS promotes the activation of IRF7, leading to type I IFN production in a CD14-dependent manner. The chain is Toll-like receptor 4 (TLR4) from Pongo pygmaeus (Bornean orangutan).